We begin with the raw amino-acid sequence, 317 residues long: uncharacterized protein (317 aa).

An HTH lysR-type domain is found at 1-60; that stretch reads MKHELSSMKAFVILAESSSFNNAAKLLNITQPALTRRIKKMEEDLHVQLFERTTRKVTLT. The H-T-H motif DNA-binding region spans 20 to 40; the sequence is FNNAAKLLNITQPALTRRIKK.

This sequence belongs to the LysR transcriptional regulatory family.

This is an uncharacterized protein from Escherichia coli (strain K12).